Consider the following 857-residue polypeptide: Leucine--tRNA ligase (857 aa).

The 'HIGH' region motif lies at 42-52; sequence PYPSGNLHMGH. Positions 615–619 match the 'KMSKS' region motif; sequence KMSKS. K618 serves as a coordination point for ATP.

Belongs to the class-I aminoacyl-tRNA synthetase family.

Its subcellular location is the cytoplasm. It catalyses the reaction tRNA(Leu) + L-leucine + ATP = L-leucyl-tRNA(Leu) + AMP + diphosphate. The sequence is that of Leucine--tRNA ligase from Thermosynechococcus vestitus (strain NIES-2133 / IAM M-273 / BP-1).